Here is a 464-residue protein sequence, read N- to C-terminus: ATP synthase subunit beta (464 aa).

153 to 160 (GGAGVGKT) serves as a coordination point for ATP.

The protein belongs to the ATPase alpha/beta chains family. As to quaternary structure, F-type ATPases have 2 components, CF(1) - the catalytic core - and CF(0) - the membrane proton channel. CF(1) has five subunits: alpha(3), beta(3), gamma(1), delta(1), epsilon(1). CF(0) has three main subunits: a(1), b(2) and c(9-12). The alpha and beta chains form an alternating ring which encloses part of the gamma chain. CF(1) is attached to CF(0) by a central stalk formed by the gamma and epsilon chains, while a peripheral stalk is formed by the delta and b chains.

Its subcellular location is the cell membrane. It catalyses the reaction ATP + H2O + 4 H(+)(in) = ADP + phosphate + 5 H(+)(out). In terms of biological role, produces ATP from ADP in the presence of a proton gradient across the membrane. The catalytic sites are hosted primarily by the beta subunits. This chain is ATP synthase subunit beta, found in Alkaliphilus oremlandii (strain OhILAs) (Clostridium oremlandii (strain OhILAs)).